The sequence spans 223 residues: Deoxyribose-phosphate aldolase (223 aa).

Asp-91 functions as the Proton donor/acceptor in the catalytic mechanism. The Schiff-base intermediate with acetaldehyde role is filled by Lys-153. The active-site Proton donor/acceptor is the Lys-182.

Belongs to the DeoC/FbaB aldolase family. DeoC type 1 subfamily.

The protein localises to the cytoplasm. It carries out the reaction 2-deoxy-D-ribose 5-phosphate = D-glyceraldehyde 3-phosphate + acetaldehyde. It functions in the pathway carbohydrate degradation; 2-deoxy-D-ribose 1-phosphate degradation; D-glyceraldehyde 3-phosphate and acetaldehyde from 2-deoxy-alpha-D-ribose 1-phosphate: step 2/2. Its function is as follows. Catalyzes a reversible aldol reaction between acetaldehyde and D-glyceraldehyde 3-phosphate to generate 2-deoxy-D-ribose 5-phosphate. The chain is Deoxyribose-phosphate aldolase from Yersinia pseudotuberculosis serotype O:1b (strain IP 31758).